The sequence spans 244 residues: Small ribosomal subunit protein eS4 (244 aa).

Residues 43–106 enclose the S4 RNA-binding domain; it reads LPLLLIVRDT…NENYLVLFDE (64 aa).

This sequence belongs to the eukaryotic ribosomal protein eS4 family.

This chain is Small ribosomal subunit protein eS4 (rps4e), found in Methanococcus vannielii.